We begin with the raw amino-acid sequence, 582 residues long: Hemagglutinin-neuraminidase (582 aa).

Residues 35–55 form a helical membrane-spanning segment; that stretch reads ILVLSVQAVTLILVIVNLGEL. 3 disulfide bridges follow: Cys178/Cys202, Cys192/Cys253, and Cys244/Cys257. N-linked (GlcNAc...) asparagine; by host glycans are attached at residues Asn284 and Asn329. Intrachain disulfides connect Cys350-Cys471, Cys382-Cys392, and Cys465-Cys475. N-linked (GlcNAc...) asparagine; by host glycans are attached at residues Asn400 and Asn448. The N-linked (GlcNAc...) asparagine; by host glycan is linked to Asn507. Cys545 and Cys556 form a disulfide bridge.

It belongs to the paramyxoviruses hemagglutinin-neuraminidase family. Homotetramer; composed of disulfide-linked homodimers. Interacts with F protein trimer.

The protein localises to the virion membrane. The protein resides in the host cell membrane. It carries out the reaction Hydrolysis of alpha-(2-&gt;3)-, alpha-(2-&gt;6)-, alpha-(2-&gt;8)- glycosidic linkages of terminal sialic acid residues in oligosaccharides, glycoproteins, glycolipids, colominic acid and synthetic substrates.. Attaches the virus to alpha-2,3-linked sialic acid-containing cell receptors and thereby initiating infection. Binding of HN protein to the receptor induces a conformational change that allows the F protein to trigger virion/cell membranes fusion. Binds to the glycan motifs sialyl Lewis (SLe) and GM2 ganglioside (GM2-glycan). Functionally, neuraminidase activity ensures the efficient spread of the virus by dissociating the mature virions from the neuraminic acid containing glycoproteins. The sequence is that of Hemagglutinin-neuraminidase (HN) from Homo sapiens (Human).